The primary structure comprises 71 residues: MSKPTVIVIFMAILVLGMATKETQGANCVNYFEITFPEVCEANWCAAECLKAYKNGKGTCWQKFCQCVYDC.

The signal sequence occupies residues Met-1–Gly-25. Intrachain disulfides connect Cys-28–Cys-71, Cys-40–Cys-60, Cys-45–Cys-65, and Cys-49–Cys-67.

Belongs to the DEFL family.

The protein localises to the secreted. This is Defensin-like protein 124 (LCR16) from Arabidopsis thaliana (Mouse-ear cress).